A 617-amino-acid chain; its full sequence is MQNYPLLSLINSPEDLRLLNKDQLPQVCNELREYLLESVSRTSGHLASGLGTVELTVALHYIFKTPFDQLIWDVGHQAYPHKILTGRRERMTTIRQKDGIHPFPWREESEFDVLSVGHSSTSISAGLGIAIAAEKENAGRKIICVIGDGAITAGMAFEAMNHAGALHTDMLVILNDNEMSISENVGGLNNHLARIFSGSIYSSLRDSSKKILDTMPPIKNFMKKTEEHMKGVISPISTLFEELGFNYIGPIDGHNIEELIATLSNMKTLKGPQFLHIRTKKGKGYTPAEQDPIGFHGVPKFDYHTGQLPKSTATPTYSQIFGEWLCETAEQDEKLIGITPAMREGSGMVEFSNRFPDQYFDVAIAEQHAVTLAAGLAIGGYKPVVAIYSTFLQRAYDQVIHDVAIQNLPVLFAIDRAGIVGADGPTHQGAFDLSFLRCIPNLIIMAPSNENECRLMLHTGYCCGKPAAVRYPRGNAIGVELEPLRKLEIGKSNLVRQGQDIAILNFGTLLPNALDVAEKLNATVVDMRFVKPLDHERINELAKTHRTLVTLEENTIQGGAGSAVSEVVNIQQHHVNILHLGLPDEFVAQGTQQEVLKELKLDATGIEEQIKNFLRIA.

Thiamine diphosphate-binding positions include histidine 76 and 117–119 (GHS). Aspartate 148 is a binding site for Mg(2+). Thiamine diphosphate-binding positions include 149-150 (GA), asparagine 177, tyrosine 285, and glutamate 366. Asparagine 177 is a Mg(2+) binding site.

The protein belongs to the transketolase family. DXPS subfamily. As to quaternary structure, homodimer. The cofactor is Mg(2+). It depends on thiamine diphosphate as a cofactor.

It carries out the reaction D-glyceraldehyde 3-phosphate + pyruvate + H(+) = 1-deoxy-D-xylulose 5-phosphate + CO2. Its pathway is metabolic intermediate biosynthesis; 1-deoxy-D-xylulose 5-phosphate biosynthesis; 1-deoxy-D-xylulose 5-phosphate from D-glyceraldehyde 3-phosphate and pyruvate: step 1/1. Functionally, catalyzes the acyloin condensation reaction between C atoms 2 and 3 of pyruvate and glyceraldehyde 3-phosphate to yield 1-deoxy-D-xylulose-5-phosphate (DXP). This is 1-deoxy-D-xylulose-5-phosphate synthase from Mannheimia succiniciproducens (strain KCTC 0769BP / MBEL55E).